We begin with the raw amino-acid sequence, 143 residues long: Large ribosomal subunit protein uL16 (143 aa).

Belongs to the universal ribosomal protein uL16 family. Part of the 50S ribosomal subunit.

Binds 23S rRNA and is also seen to make contacts with the A and possibly P site tRNAs. The protein is Large ribosomal subunit protein uL16 of Sphingopyxis alaskensis (strain DSM 13593 / LMG 18877 / RB2256) (Sphingomonas alaskensis).